Here is a 215-residue protein sequence, read N- to C-terminus: Adenylate kinase (215 aa).

ATP is bound at residue 10-15 (GAGKGT). Positions 30-59 (STGDMFRKAIKDETDLGKEAKSYMDRGELV) are NMP. Residues Thr31, Arg36, 57 to 59 (ELV), 85 to 88 (GFPR), and Gln92 contribute to the AMP site. The interval 126-163 (GRRICEKCGTTYHLVFNPPKVDGICDIDGGKLYQREDD) is LID. Arg127 lines the ATP pocket. The Zn(2+) site is built by Cys130 and Cys133. 136–137 (TY) contributes to the ATP binding site. Zn(2+) is bound by residues Cys150 and Asp153. AMP-binding residues include Arg160 and Arg171. Lys199 provides a ligand contact to ATP.

It belongs to the adenylate kinase family. In terms of assembly, monomer.

The protein resides in the cytoplasm. The enzyme catalyses AMP + ATP = 2 ADP. The protein operates within purine metabolism; AMP biosynthesis via salvage pathway; AMP from ADP: step 1/1. In terms of biological role, catalyzes the reversible transfer of the terminal phosphate group between ATP and AMP. Plays an important role in cellular energy homeostasis and in adenine nucleotide metabolism. This is Adenylate kinase from Staphylococcus epidermidis (strain ATCC 35984 / DSM 28319 / BCRC 17069 / CCUG 31568 / BM 3577 / RP62A).